Here is a 147-residue protein sequence, read N- to C-terminus: Hemoglobin subunit beta (147 aa).

A Globin domain is found at 3–147 (EWTDKERSII…VVSALGKQYH (145 aa)). Residues H64 and H93 each coordinate heme b.

It belongs to the globin family. In terms of assembly, hb1 is a heterotetramer of two alpha chains and two beta chains. In terms of tissue distribution, red blood cells.

Involved in oxygen transport from gills to the various peripheral tissues. The sequence is that of Hemoglobin subunit beta (hbb) from Trematomus bernacchii (Emerald rockcod).